Here is a 64-residue protein sequence, read N- to C-terminus: Large ribosomal subunit protein bL35 (64 aa).

Belongs to the bacterial ribosomal protein bL35 family.

This Chlorobium limicola (strain DSM 245 / NBRC 103803 / 6330) protein is Large ribosomal subunit protein bL35.